We begin with the raw amino-acid sequence, 180 residues long: Bifunctional bis(5'-adenosyl)-triphosphatase/adenylylsulfatase FHIT (180 aa).

Residues 27-134 enclose the HIT domain; that stretch reads SYAFGPYKID…LPRKGGDFEK (108 aa). Positions 52 and 108 each coordinate substrate. The Histidine triad motif motif lies at 119 to 123; it reads HVHIH. Catalysis depends on His-121, which acts as the Tele-AMP-histidine intermediate. His-123 contacts substrate.

It catalyses the reaction P(1),P(3)-bis(5'-adenosyl) triphosphate + H2O = AMP + ADP + 2 H(+). The enzyme catalyses adenosine 5'-phosphosulfate + H2O = sulfate + AMP + 2 H(+). The catalysed reaction is adenosine 5'-phosphosulfate + NH4(+) = adenosine 5'-phosphoramidate + sulfate + 2 H(+). It carries out the reaction adenosine 5'-phosphoramidate + H2O = AMP + NH4(+). Possesses dinucleoside triphosphate hydrolase activity. Cleaves P(1)-P(3)-bis(5'-adenosyl) triphosphate (Ap3A) to yield AMP and ADP. Exhibits adenylylsulfatase activity, hydrolyzing adenosine 5'-phosphosulfate to yield AMP and sulfate. Exhibits adenosine 5'-monophosphoramidase activity, hydrolyzing purine nucleotide phosphoramidates with a single phosphate group such as adenosine 5'monophosphoramidate (AMP-NH2) to yield AMP and NH2. Exhibits adenylylsulfate-ammonia adenylyltransferase, catalyzing the ammonolysis of adenosine 5'-phosphosulfate resulting in the formation of adenosine 5'-phosphoramidate. The chain is Bifunctional bis(5'-adenosyl)-triphosphatase/adenylylsulfatase FHIT from Arabidopsis thaliana (Mouse-ear cress).